Here is a 421-residue protein sequence, read N- to C-terminus: Thymidine phosphorylase (421 aa).

This sequence belongs to the thymidine/pyrimidine-nucleoside phosphorylase family. In terms of assembly, homodimer.

The enzyme catalyses thymidine + phosphate = 2-deoxy-alpha-D-ribose 1-phosphate + thymine. Its function is as follows. The enzymes which catalyze the reversible phosphorolysis of pyrimidine nucleosides are involved in the degradation of these compounds and in their utilization as carbon and energy sources, or in the rescue of pyrimidine bases for nucleotide synthesis. In Mycoplasma genitalium (strain ATCC 33530 / DSM 19775 / NCTC 10195 / G37) (Mycoplasmoides genitalium), this protein is Thymidine phosphorylase (deoA).